A 126-amino-acid chain; its full sequence is Glycine cleavage system H protein (126 aa).

The region spanning 21-103 (TVTVGISDHA…YESGWIARIK (83 aa)) is the Lipoyl-binding domain. Lys62 is subject to N6-lipoyllysine.

Belongs to the GcvH family. In terms of assembly, the glycine cleavage system is composed of four proteins: P, T, L and H. Requires (R)-lipoate as cofactor.

Its function is as follows. The glycine cleavage system catalyzes the degradation of glycine. The H protein shuttles the methylamine group of glycine from the P protein to the T protein. In Aliivibrio fischeri (strain MJ11) (Vibrio fischeri), this protein is Glycine cleavage system H protein.